The primary structure comprises 200 residues: ATP synthase subunit s, mitochondrial (200 aa).

Residues 1 to 25 constitute a mitochondrion transit peptide; that stretch reads MMMFGKISRQLCSLKKIPWSCDSRY. The interval 1-61 is N-terminal domain; the sequence is MMMFGKISRQ…SEWLLRCGAK (61 aa). Glycine 59 contacts Mg(2+). LRR repeat units lie at residues 62 to 87, 88 to 116, 117 to 141, and 142 to 173; these read VRYCGHQKWLHDYNTLPGSSIDRYKI, QAIDATDSCIMDIGLDHMVGLEHVEKITL, CKCHYIEDNCLQRLSQLENLRKSLL, and ELEIIACGNVTDNGVIALRHFRNLKYLFLSDL. A Mg(2+)-binding site is contributed by threonine 93.

It belongs to the ATP synthase subunit s family. In terms of assembly, homotetramer. Associates with ATP synthase.

The protein localises to the mitochondrion. It localises to the mitochondrion inner membrane. Its function is as follows. Involved in regulation of mitochondrial membrane ATP synthase. Necessary for H(+) conduction of ATP synthase. Facilitates energy-driven catalysis of ATP synthesis by blocking a proton leak through an alternative proton exit pathway. The chain is ATP synthase subunit s, mitochondrial (Dmac2l) from Mus musculus (Mouse).